We begin with the raw amino-acid sequence, 105 residues long: MMIPTEKIRIRLKAYDHKLLDQSTSEIVETARRTGSAVVGPIPLPTSINKFCVLRSPHVNKKSREQFEMRTHRRLLDILEPTQQTIDLLMKLELSAGVDVEIKLP.

Belongs to the universal ribosomal protein uS10 family. In terms of assembly, part of the 30S ribosomal subunit.

Its function is as follows. Involved in the binding of tRNA to the ribosomes. The protein is Small ribosomal subunit protein uS10 of Desulfotalea psychrophila (strain LSv54 / DSM 12343).